We begin with the raw amino-acid sequence, 184 residues long: Peptidyl-tRNA hydrolase (184 aa).

Tyrosine 17 provides a ligand contact to tRNA. Catalysis depends on histidine 22, which acts as the Proton acceptor. Phenylalanine 71, asparagine 73, and asparagine 119 together coordinate tRNA.

This sequence belongs to the PTH family. In terms of assembly, monomer.

It is found in the cytoplasm. It catalyses the reaction an N-acyl-L-alpha-aminoacyl-tRNA + H2O = an N-acyl-L-amino acid + a tRNA + H(+). Hydrolyzes ribosome-free peptidyl-tRNAs (with 1 or more amino acids incorporated), which drop off the ribosome during protein synthesis, or as a result of ribosome stalling. In terms of biological role, catalyzes the release of premature peptidyl moieties from peptidyl-tRNA molecules trapped in stalled 50S ribosomal subunits, and thus maintains levels of free tRNAs and 50S ribosomes. In Corynebacterium diphtheriae (strain ATCC 700971 / NCTC 13129 / Biotype gravis), this protein is Peptidyl-tRNA hydrolase.